Consider the following 823-residue polypeptide: Lon protease (823 aa).

Residues 51–246 (IPILPLRNMV…RLLFILNREY (196 aa)) form the Lon N-terminal domain. 397-404 (GPPGVGKT) serves as a coordination point for ATP. Positions 633–815 (NDYAGVVTGL…QQVVDLALLR (183 aa)) constitute a Lon proteolytic domain. Active-site residues include S721 and K764.

It belongs to the peptidase S16 family. In terms of assembly, homohexamer. Organized in a ring with a central cavity.

The protein resides in the cytoplasm. The catalysed reaction is Hydrolysis of proteins in presence of ATP.. In terms of biological role, ATP-dependent serine protease that mediates the selective degradation of mutant and abnormal proteins as well as certain short-lived regulatory proteins. Required for cellular homeostasis and for survival from DNA damage and developmental changes induced by stress. Degrades polypeptides processively to yield small peptide fragments that are 5 to 10 amino acids long. Binds to DNA in a double-stranded, site-specific manner. In Parabacteroides distasonis (strain ATCC 8503 / DSM 20701 / CIP 104284 / JCM 5825 / NCTC 11152), this protein is Lon protease.